Reading from the N-terminus, the 88-residue chain is Cytochrome c oxidase subunit 6B2 (88 aa).

A CHCH domain is found at 29–75; that stretch reads TRNCYQNFLDYHRCIKTMNRRGKSTQPCEYYFRVYHSLCPISWVQRW. The Cx9C motif motif lies at 32-42; that stretch reads CYQNFLDYHRC. 2 cysteine pairs are disulfide-bonded: cysteine 32–cysteine 67 and cysteine 42–cysteine 56. A Cx10C motif motif is present at residues 56–67; it reads CEYYFRVYHSLC.

It belongs to the cytochrome c oxidase subunit 6B family. In terms of assembly, component of the cytochrome c oxidase (complex IV, CIV), a multisubunit enzyme composed of 14 subunits. The complex is composed of a catalytic core of 3 subunits MT-CO1, MT-CO2 and MT-CO3, encoded in the mitochondrial DNA, and 11 supernumerary subunits COX4I1 (or COX4I2), COX5A, COX5B, COX6A2 (or COX6A1), COX6B1 (or COX6B2), COX6C, COX7A1 (or COX7A2), COX7B, COX7C, COX8B and NDUFA4, which are encoded in the nuclear genome. The complex exists as a monomer or a dimer and forms supercomplexes (SCs) in the inner mitochondrial membrane with NADH-ubiquinone oxidoreductase (complex I, CI) and ubiquinol-cytochrome c oxidoreductase (cytochrome b-c1 complex, complex III, CIII), resulting in different assemblies (supercomplex SCI(1)III(2)IV(1) and megacomplex MCI(2)III(2)IV(2)). As to expression, testis specific.

It is found in the mitochondrion inner membrane. The protein operates within energy metabolism; oxidative phosphorylation. Component of the cytochrome c oxidase, the last enzyme in the mitochondrial electron transport chain which drives oxidative phosphorylation. The respiratory chain contains 3 multisubunit complexes succinate dehydrogenase (complex II, CII), ubiquinol-cytochrome c oxidoreductase (cytochrome b-c1 complex, complex III, CIII) and cytochrome c oxidase (complex IV, CIV), that cooperate to transfer electrons derived from NADH and succinate to molecular oxygen, creating an electrochemical gradient over the inner membrane that drives transmembrane transport and the ATP synthase. Cytochrome c oxidase is the component of the respiratory chain that catalyzes the reduction of oxygen to water. Electrons originating from reduced cytochrome c in the intermembrane space (IMS) are transferred via the dinuclear copper A center (CU(A)) of subunit 2 and heme A of subunit 1 to the active site in subunit 1, a binuclear center (BNC) formed by heme A3 and copper B (CU(B)). The BNC reduces molecular oxygen to 2 water molecules using 4 electrons from cytochrome c in the IMS and 4 protons from the mitochondrial matrix. The chain is Cytochrome c oxidase subunit 6B2 (COX6B2) from Bos taurus (Bovine).